We begin with the raw amino-acid sequence, 1839 residues long: Mannuronan C5-epimerase AlgE3 (1839 aa).

PbH1 repeat units lie at residues 133–155 (DRDVTLERVEIREMSGYGFDPHE), 157–179 (TINLTIRDSVAHDNGLDGFVADY), 180–202 (QVGGVFENNVSYNNDRHGFNIVT), 204–226 (TNDFVLSNNVAYGNGGAGLVVQR), 257–279 (THDVTLQNAEIYGNGLYGVRVYG), 280–302 (AQDVQLLDNQIHDNSQNGAYAEV), 320–342 (TTGTWLEGNVISGSANSTFGIQE), and 347–369 (TDYSSLYANTIDGVQNGTVRLYG). The span at 372–386 (STVSEQPSSGQQATL) shows a compositional bias: polar residues. The segment at 372 to 392 (STVSEQPSSGQQATLEGTAGN) is disordered. Hemolysin-type calcium-binding repeat units follow at residues 387–399 (EGTAGNDVLSGTG), 406–422 (GLAGNDRLDGGAGDDTL), 424–440 (GGAGRDTLTGGAGADTF), 538–550 (TGTEGNDNLSGTD), 557–573 (GYGGNDTLNGGAGNDIL), 574–591 (VGGAGRDTLTGGAGADVF), 695–709 (EGTDGNDSLQGTGAD), 714–730 (GLGGRDSLNGGAGDDVL), and 732–748 (GGAERDTLTGGTGADTF). PbH1 repeat units follow at residues 975–997 (DRNVTLERVEIREMSGYGFDPHE), 999–1021 (TINLTIRDSVAHDNGLDGFVADY), 1022–1044 (LVDSVFENNVAYNNDRHGFNVVT), 1046–1068 (TYDFTLSNNVAYGNGGAGLVIQR), 1099–1121 (TNNITLQNAEIYGNGYSGVRLYG), 1122–1143 (TEDVQILNNQIHDNAQNVAYAE), 1161–1183 (TTGTWIEGNVISGSANSTYGIEE), and 1188–1210 (TDYSSLYANTIDGVQTGAVRLNG). A compositionally biased stretch (polar residues) spans 1215-1236 (VSDQPGTGQQATLEGTTGNDTL). The disordered stretch occupies residues 1215–1238 (VSDQPGTGQQATLEGTTGNDTLGG). 10 Hemolysin-type calcium-binding repeats span residues 1229–1243 (GTTGNDTLGGSDAHE), 1247–1263 (GLDGDDRLDGGAGNDIL), 1265–1281 (GGVGRDTLTGGAGADTF), 1398–1414 (GHAGNDTLDGAGGDDIL), 1415–1432 (VGGAGSDSLTGGAGADVF), 1536–1552 (EGTAGNDSLQGTAADEV), 1554–1571 (HGGSGRDTLAGGAGADVF), 1670–1681 (GGDGNDTLSGGS), 1688–1704 (GGAGNDSLSGGAGNDIL), and 1706–1722 (GGAGRDTLSGGSGSDIF).

Belongs to the D-mannuronate C5-epimerase family. It depends on Ca(2+) as a cofactor.

The protein localises to the secreted. It carries out the reaction [(1-&gt;4)-beta-D-mannuronosyl](n) = [alginate](n). It participates in glycan biosynthesis; alginate biosynthesis. Its activity is regulated as follows. Inhibited by zinc. Converts beta-D-mannuronic acid (M) to alpha-L-guluronic acid (G), producing a polymer with gel-forming capacity, required for the formation of the cyst coat. This Azotobacter vinelandii protein is Mannuronan C5-epimerase AlgE3.